A 486-amino-acid chain; its full sequence is Ribosomal RNA small subunit methyltransferase F (486 aa).

S-adenosyl-L-methionine contacts are provided by residues 124-130, E148, D175, and D193; that span reads ASAPGSK. The active-site Nucleophile is the C246.

The protein belongs to the class I-like SAM-binding methyltransferase superfamily. RsmB/NOP family.

It localises to the cytoplasm. It carries out the reaction cytidine(1407) in 16S rRNA + S-adenosyl-L-methionine = 5-methylcytidine(1407) in 16S rRNA + S-adenosyl-L-homocysteine + H(+). Specifically methylates the cytosine at position 1407 (m5C1407) of 16S rRNA. This chain is Ribosomal RNA small subunit methyltransferase F, found in Shewanella baltica (strain OS185).